Consider the following 314-residue polypeptide: MNNTKQPVVILVGPTAVGKTNLSIQLAKSLNAEIISGDSMQIYKGMDIGTAKITEQEMEGVPHHLIDILDPQDSFSTADYQSLVRNKISEIANRGKLPMIVGGTGLYIQSVLYDYTFTEEANDPVFRESMQMAAEREGADFLHAKLAAADPEAAAAIHPNNTRRVIRALEILHTSGKTMSQHLKEQKRELLYNAVLIGLTMDRDTLYERINQRVDLMMQSGLLPEVKRLYDKNVRDCQSIQAIGYKELYAYFDGFVTLSDAVEQLKQNSRRYAKRQLTWFRNKMQVTWFDMTPPVDMELKKKEIFTHIAGKLEL.

ATP is bound at residue 13-20 (GPTAVGKT). 15-20 (TAVGKT) is a substrate binding site. The tract at residues 38–41 (DSMQ) is interaction with substrate tRNA.

It belongs to the IPP transferase family. As to quaternary structure, monomer. Mg(2+) serves as cofactor.

It carries out the reaction adenosine(37) in tRNA + dimethylallyl diphosphate = N(6)-dimethylallyladenosine(37) in tRNA + diphosphate. Catalyzes the transfer of a dimethylallyl group onto the adenine at position 37 in tRNAs that read codons beginning with uridine, leading to the formation of N6-(dimethylallyl)adenosine (i(6)A). In Bacillus subtilis (strain 168), this protein is tRNA dimethylallyltransferase.